The sequence spans 140 residues: Interleukin-4 (140 aa).

An N-terminal signal peptide occupies residues 1 to 20 (MGLNPQLVVILLFFLECTRS). Cystine bridges form between Cys-25–Cys-107, Cys-47–Cys-87, and Cys-69–Cys-114. 3 N-linked (GlcNAc...) asparagine glycosylation sites follow: Asn-61, Asn-91, and Asn-117.

This sequence belongs to the IL-4/IL-13 family. As to quaternary structure, interacts with IL4R. Interacts with IL13RA1.

The protein resides in the secreted. Functionally, cytokine secreted primarily by mast cells, T-cells, eosinophils, and basophils that plays a role in regulating antibody production, hematopoiesis and inflammation, and the development of effector T-cell responses. Induces the expression of class II MHC molecules on resting B-cells. Enhances both secretion and cell surface expression of IgE and IgG1. Also regulates the expression of the low affinity Fc receptor for IgE (CD23) on both lymphocytes and monocytes. Positively regulates IL31RA expression in macrophages. Stimulates autophagy in dendritic cells by interfering with mTORC1 signaling and through the induction of RUFY4. In addition, plays a critical role in higher functions of the normal brain, such as memory and learning. Upon binding to IL4, IL4R receptor dimerizes either with the common IL2R gamma chain/IL2RG to produce the type 1 signaling complex, located mainly on hematopoietic cells, or with the IL13RA1 to produce the type 2 complex, which is also expressed on nonhematopoietic cells. Engagement of both types of receptors initiates JAK3 and to a lower extend JAK1 phosphorylation leading to activation of the signal transducer and activator of transcription 6/STAT6. The chain is Interleukin-4 (Il4) from Mus musculus (Mouse).